Here is a 109-residue protein sequence, read N- to C-terminus: Ribulose bisphosphate carboxylase small subunit (109 aa).

Belongs to the RuBisCO small chain family. Heterohexadecamer of 8 large and 8 small subunits.

Its subcellular location is the carboxysome. Its function is as follows. RuBisCO catalyzes two reactions: the carboxylation of D-ribulose 1,5-bisphosphate, the primary event in carbon dioxide fixation, as well as the oxidative fragmentation of the pentose substrate in the photorespiration process. Both reactions occur simultaneously and in competition at the same active site. Although the small subunit is not catalytic it is essential for maximal activity. The chain is Ribulose bisphosphate carboxylase small subunit from Prochlorothrix hollandica.